The sequence spans 229 residues: Large ribosomal subunit protein uL1 (229 aa).

It belongs to the universal ribosomal protein uL1 family. Part of the 50S ribosomal subunit.

Its function is as follows. Binds directly to 23S rRNA. The L1 stalk is quite mobile in the ribosome, and is involved in E site tRNA release. Functionally, protein L1 is also a translational repressor protein, it controls the translation of the L11 operon by binding to its mRNA. In Thermus thermophilus (strain ATCC BAA-163 / DSM 7039 / HB27), this protein is Large ribosomal subunit protein uL1.